Here is a 391-residue protein sequence, read N- to C-terminus: BRCA1-A complex subunit Abraxas 1 (391 aa).

Residues 8–156 (VRISGFVLSS…THRLEFSAFI (149 aa)) form the MPN domain. Residues 223–261 (LLAEMQKVCVEVEKSERTVEKLQEDIAQLKEAIGKQKTH) are a coiled coil. The interval 354 to 391 (QRLKRKRKTREVSESASESGSDTEIEMNGQSGSNSPVF) is disordered. Over residues 367–391 (ESASESGSDTEIEMNGQSGSNSPVF) the composition is skewed to polar residues. S388 is subject to Phosphoserine. A pSXXF motif motif is present at residues 388-391 (SPVF).

Belongs to the FAM175 family. Abraxas subfamily. As to quaternary structure, component of the ARISC complex. Component of the BRCA1-A complex. Homodimer. Post-translationally, phosphorylation of Ser-388 of the pSXXF motif by ATM or ATR constitutes a specific recognition motif for the BRCT domain of BRCA1.

It is found in the nucleus. Its function is as follows. Involved in DNA damage response and double-strand break (DSB) repair. Component of the BRCA1-A complex, acting as a central scaffold protein that assembles the various components of the complex. The BRCA1-A complex specifically recognizes 'Lys-63'-linked ubiquitinated histones H2A and H2AX at DNA lesion sites. This complex also possesses deubiquitinase activity that specifically removes 'Lys-63'-linked ubiquitin on histones H2A and H2AX. The protein is BRCA1-A complex subunit Abraxas 1 of Danio rerio (Zebrafish).